Consider the following 291-residue polypeptide: Acetylglutamate kinase (291 aa).

Substrate-binding positions include 64 to 65 (GG), Arg-86, and Asn-190.

This sequence belongs to the acetylglutamate kinase family. ArgB subfamily.

It is found in the cytoplasm. The catalysed reaction is N-acetyl-L-glutamate + ATP = N-acetyl-L-glutamyl 5-phosphate + ADP. It participates in amino-acid biosynthesis; L-arginine biosynthesis; N(2)-acetyl-L-ornithine from L-glutamate: step 2/4. Functionally, catalyzes the ATP-dependent phosphorylation of N-acetyl-L-glutamate. In Leptospira borgpetersenii serovar Hardjo-bovis (strain L550), this protein is Acetylglutamate kinase.